Consider the following 329-residue polypeptide: Vomeronasal type-1 receptor 43 (329 aa).

The Extracellular segment spans residues 1-32 (MSKILFFSPCSLFSHTMNKNSRLHTNSNIGNT). Residues 33–53 (FFSEIGIGITGNSFLLLYHIL) traverse the membrane as a helical segment. Residues 54-65 (KFIRGHRPRLTD) lie on the Cytoplasmic side of the membrane. The chain crosses the membrane as a helical span at residues 66-86 (LPIGLLSLIHLLMLLVAAFIA). At 87–109 (TDIFISRRGWDDIICKFLVYLYR) the chain is on the extracellular side. A disulfide bond links Cys101 and Cys188. A helical transmembrane segment spans residues 110–130 (VLRGLSLCTTSMLSVLQAIIL). Topologically, residues 131 to 147 (SPRSSCLSKFKHISLHH) are cytoplasmic. A helical membrane pass occupies residues 148-168 (ILCAILFLSVLYMLISSQLLV). Residues 169 to 209 (SIIATPNLTTNDLTYVTQSCSILPLSYLVESINSTLLAIRE) are Extracellular-facing. Residues Asn175 and Asn201 are each glycosylated (N-linked (GlcNAc...) asparagine). A helical membrane pass occupies residues 210–230 (YFLISLMFLSTWYIVALLCMH). At 231-255 (RKQTQHLQETRLSLKKSPEQSATQT) the chain is on the cytoplasmic side. The helical transmembrane segment at 256–276 (ILMLMTFFVLMTIYDNIVSCL) threads the bilayer. Residues 277–285 (RTMLLNDPT) are Extracellular-facing. Residues 286–306 (SYSIELFMIHIYATVSPFVFM) traverse the membrane as a helical segment. Over 307-329 (SNEKHIVNFLRSMGKRMINLNLH) the chain is Cytoplasmic.

It belongs to the G-protein coupled receptor 1 family.

It localises to the cell membrane. Its function is as follows. Putative pheromone receptor implicated in the regulation of social and reproductive behavior. In Mus musculus (Mouse), this protein is Vomeronasal type-1 receptor 43 (Vmn1r43).